The chain runs to 181 residues: Regulator of G-protein signaling 5 (181 aa).

The RGS domain occupies serine 64–isoleucine 180.

The protein resides in the cytoplasm. It is found in the membrane. Its function is as follows. Inhibits signal transduction by increasing the GTPase activity of G protein alpha subunits thereby driving them into their inactive GDP-bound form. Binds to G(i)-alpha and G(o)-alpha, but not to G(s)-alpha. In Bos taurus (Bovine), this protein is Regulator of G-protein signaling 5 (RGS5).